Reading from the N-terminus, the 376-residue chain is Succinyl-diaminopimelate desuccinylase (376 aa).

H66 lines the Zn(2+) pocket. Residue D68 is part of the active site. D99 serves as a coordination point for Zn(2+). The active-site Proton acceptor is E133. Zn(2+)-binding residues include E134, E162, and H348.

Belongs to the peptidase M20A family. DapE subfamily. In terms of assembly, homodimer. Requires Zn(2+) as cofactor. Co(2+) serves as cofactor.

The catalysed reaction is N-succinyl-(2S,6S)-2,6-diaminopimelate + H2O = (2S,6S)-2,6-diaminopimelate + succinate. It participates in amino-acid biosynthesis; L-lysine biosynthesis via DAP pathway; LL-2,6-diaminopimelate from (S)-tetrahydrodipicolinate (succinylase route): step 3/3. Its function is as follows. Catalyzes the hydrolysis of N-succinyl-L,L-diaminopimelic acid (SDAP), forming succinate and LL-2,6-diaminopimelate (DAP), an intermediate involved in the bacterial biosynthesis of lysine and meso-diaminopimelic acid, an essential component of bacterial cell walls. The sequence is that of Succinyl-diaminopimelate desuccinylase from Thioalkalivibrio sulfidiphilus (strain HL-EbGR7).